We begin with the raw amino-acid sequence, 207 residues long: ATP phosphoribosyltransferase (207 aa).

Belongs to the ATP phosphoribosyltransferase family. Short subfamily. In terms of assembly, heteromultimer composed of HisG and HisZ subunits.

The protein resides in the cytoplasm. It carries out the reaction 1-(5-phospho-beta-D-ribosyl)-ATP + diphosphate = 5-phospho-alpha-D-ribose 1-diphosphate + ATP. It functions in the pathway amino-acid biosynthesis; L-histidine biosynthesis; L-histidine from 5-phospho-alpha-D-ribose 1-diphosphate: step 1/9. In terms of biological role, catalyzes the condensation of ATP and 5-phosphoribose 1-diphosphate to form N'-(5'-phosphoribosyl)-ATP (PR-ATP). Has a crucial role in the pathway because the rate of histidine biosynthesis seems to be controlled primarily by regulation of HisG enzymatic activity. The sequence is that of ATP phosphoribosyltransferase from Geobacillus kaustophilus (strain HTA426).